We begin with the raw amino-acid sequence, 261 residues long: Cytochrome c oxidase subunit 3 (261 aa).

The Mitochondrial matrix portion of the chain corresponds to 1-15 (MVHQSHAYHMLKPSP). Residues 16–34 (WPLTGALSALLMTSGLAMW) traverse the membrane as a helical segment. Residues 35–40 (FHFHST) lie on the Mitochondrial intermembrane side of the membrane. The helical transmembrane segment at 41–66 (TLLLTGMLTNALTMYQWWRDVVREST) threads the bilayer. Topologically, residues 67-72 (YQGHHT) are mitochondrial matrix. The chain crosses the membrane as a helical span at residues 73 to 105 (LPVQKGLRYGMILFITSEVFFFAGFFWAFYHSS). Over 106–128 (LAPTPQLGGHWPPTGITPLNPLE) the chain is Mitochondrial intermembrane. The chain crosses the membrane as a helical span at residues 129 to 152 (VPLLNTAVLLASGVSITWAHHSLM). Over 153 to 155 (ENN) the chain is Mitochondrial matrix. A helical membrane pass occupies residues 156-183 (RTQMIQALLITILLGIYFTLLQASEYIE). Residues 184–190 (APFTISD) lie on the Mitochondrial intermembrane side of the membrane. A helical transmembrane segment spans residues 191 to 223 (GIYGSTFFMTTGFHGLHVIIGSTFLTVCLSCQL). Residues 224 to 232 (LFHFTSKHH) are Mitochondrial matrix-facing. A helical transmembrane segment spans residues 233–256 (FGFEAAAWYWHFVDVVWLFLYVSI). Residues 257-261 (YWWGS) are Mitochondrial intermembrane-facing.

Belongs to the cytochrome c oxidase subunit 3 family. As to quaternary structure, component of the cytochrome c oxidase (complex IV, CIV), a multisubunit enzyme composed of 14 subunits. The complex is composed of a catalytic core of 3 subunits MT-CO1, MT-CO2 and MT-CO3, encoded in the mitochondrial DNA, and 11 supernumerary subunits COX4I, COX5A, COX5B, COX6A, COX6B, COX6C, COX7A, COX7B, COX7C, COX8 and NDUFA4, which are encoded in the nuclear genome. The complex exists as a monomer or a dimer and forms supercomplexes (SCs) in the inner mitochondrial membrane with NADH-ubiquinone oxidoreductase (complex I, CI) and ubiquinol-cytochrome c oxidoreductase (cytochrome b-c1 complex, complex III, CIII), resulting in different assemblies (supercomplex SCI(1)III(2)IV(1) and megacomplex MCI(2)III(2)IV(2)).

The protein resides in the mitochondrion inner membrane. The enzyme catalyses 4 Fe(II)-[cytochrome c] + O2 + 8 H(+)(in) = 4 Fe(III)-[cytochrome c] + 2 H2O + 4 H(+)(out). In terms of biological role, component of the cytochrome c oxidase, the last enzyme in the mitochondrial electron transport chain which drives oxidative phosphorylation. The respiratory chain contains 3 multisubunit complexes succinate dehydrogenase (complex II, CII), ubiquinol-cytochrome c oxidoreductase (cytochrome b-c1 complex, complex III, CIII) and cytochrome c oxidase (complex IV, CIV), that cooperate to transfer electrons derived from NADH and succinate to molecular oxygen, creating an electrochemical gradient over the inner membrane that drives transmembrane transport and the ATP synthase. Cytochrome c oxidase is the component of the respiratory chain that catalyzes the reduction of oxygen to water. Electrons originating from reduced cytochrome c in the intermembrane space (IMS) are transferred via the dinuclear copper A center (CU(A)) of subunit 2 and heme A of subunit 1 to the active site in subunit 1, a binuclear center (BNC) formed by heme A3 and copper B (CU(B)). The BNC reduces molecular oxygen to 2 water molecules using 4 electrons from cytochrome c in the IMS and 4 protons from the mitochondrial matrix. This Pongo pygmaeus (Bornean orangutan) protein is Cytochrome c oxidase subunit 3 (MT-CO3).